Here is a 228-residue protein sequence, read N- to C-terminus: Phosphoenolpyruvate guanylyltransferase (228 aa).

Positions 148, 164, and 167 each coordinate phosphoenolpyruvate.

This sequence belongs to the CofC family.

The catalysed reaction is phosphoenolpyruvate + GTP + H(+) = enolpyruvoyl-2-diphospho-5'-guanosine + diphosphate. It participates in cofactor biosynthesis; coenzyme F420 biosynthesis. In terms of biological role, guanylyltransferase that catalyzes the activation of phosphoenolpyruvate (PEP) as enolpyruvoyl-2-diphospho-5'-guanosine, via the condensation of PEP with GTP. It is involved in the biosynthesis of coenzyme F420, a hydride carrier cofactor. This Thermomonospora curvata (strain ATCC 19995 / DSM 43183 / JCM 3096 / KCTC 9072 / NBRC 15933 / NCIMB 10081 / Henssen B9) protein is Phosphoenolpyruvate guanylyltransferase.